The chain runs to 572 residues: Isocitrate dehydrogenase kinase/phosphatase (572 aa).

Residues 317-323 (APGVRGM) and Lys338 each bind ATP. Asp373 is an active-site residue.

It belongs to the AceK family.

The protein localises to the cytoplasm. The catalysed reaction is L-seryl-[isocitrate dehydrogenase] + ATP = O-phospho-L-seryl-[isocitrate dehydrogenase] + ADP + H(+). In terms of biological role, bifunctional enzyme which can phosphorylate or dephosphorylate isocitrate dehydrogenase (IDH) on a specific serine residue. This is a regulatory mechanism which enables bacteria to bypass the Krebs cycle via the glyoxylate shunt in response to the source of carbon. When bacteria are grown on glucose, IDH is fully active and unphosphorylated, but when grown on acetate or ethanol, the activity of IDH declines drastically concomitant with its phosphorylation. This Ectopseudomonas mendocina (strain ymp) (Pseudomonas mendocina) protein is Isocitrate dehydrogenase kinase/phosphatase.